We begin with the raw amino-acid sequence, 132 residues long: Fluoride-specific ion channel FluC 1 (132 aa).

Helical transmembrane passes span 9 to 29, 35 to 55, 72 to 89, and 100 to 120; these read LAAV…LSAL, ASWP…VGYF, LLGT…TMQV, and WGLA…AVHL. Na(+) is bound by residues Gly-79 and Thr-82.

The protein belongs to the fluoride channel Fluc/FEX (TC 1.A.43) family.

Its subcellular location is the cell membrane. The enzyme catalyses fluoride(in) = fluoride(out). Its activity is regulated as follows. Na(+) is not transported, but it plays an essential structural role and its presence is essential for fluoride channel function. Fluoride-specific ion channel. Important for reducing fluoride concentration in the cell, thus reducing its toxicity. The protein is Fluoride-specific ion channel FluC 1 of Mycolicibacterium paratuberculosis (strain ATCC BAA-968 / K-10) (Mycobacterium paratuberculosis).